The primary structure comprises 503 residues: Probable voltage-gated potassium channel subunit kvs-4 (503 aa).

At 1-231 the chain is on the cytoplasmic side; the sequence is MNSAIMQGAA…EPASSGKAQA (231 aa). Residues 217 to 219 carry the Required for dendritic localization motif; sequence WNI. A helical transmembrane segment spans residues 232–252; it reads FAVCSVVFVLISISGLVLGSL. The Extracellular segment spans residues 253 to 275; the sequence is PELQVATKQRNNLTGEEFTEMEP. The N-linked (GlcNAc...) asparagine glycan is linked to asparagine 264. The chain crosses the membrane as a helical span at residues 276-296; sequence MPILGYIEYVCIVWFTMEYGL. At 297-313 the chain is on the cytoplasmic side; it reads KMLVSAERSKTFRQLLN. Residues 314 to 334 form a helical membrane-spanning segment; that stretch reads IIDLLAILPFIIEMLLLIFGI. Residues 335 to 346 lie on the Extracellular side of the membrane; it reads STEQLRDLKGAF. Residues 347–366 traverse the membrane as a helical; Voltage-sensor segment; it reads LVIRILRVLRVIRVLKLGRY. At 367 to 383 the chain is on the cytoplasmic side; sequence SSGLQMFGKTLKASFRQ. The interval 368-383 is S4-S5 linker; it reads SGLQMFGKTLKASFRQ. A helical transmembrane segment spans residues 384–404; that stretch reads LGMMAMVVMTGVIFFSTLVYF. The Extracellular segment spans residues 405-417; sequence LEKDEPASKFHSI. The helical intramembrane region spans 418 to 429; that stretch reads PAACWWCIVTMT. An intramembrane segment occupies 430–434; it reads TVGYG. Residues 430–435 carry the Selectivity filter motif; that stretch reads TVGYGD. The Extracellular portion of the chain corresponds to 435 to 445; it reads DLTPVTVPGKL. Residues 446–466 traverse the membrane as a helical segment; sequence VATGAIACGVLVLALPITIIV. The Cytoplasmic portion of the chain corresponds to 467–503; sequence DNFMKVAETERPAGGNRYRTSQYPKATKSEQMILKVT. Residues 496-500 carry the Required for dendritic localization motif; sequence EQMIL.

This sequence belongs to the potassium channel family. B (Shab) (TC 1.A.1.2) subfamily. Kv2.2/KCNB2 sub-subfamily. Homotetramer or heterotetramer. Interacts with unc-101 (via N-terminus); which targets kvs-4 to dendrites. In terms of tissue distribution, expressed in the cholinergic motor neuron DA9, mechanosensory neurons ALM and PLM, and the interneuron PVPL.

Its subcellular location is the cell membrane. It is found in the perikaryon. The protein resides in the cell projection. The protein localises to the axon. It localises to the dendrite. Functionally, voltage-gated potassium channel that mediates transmembrane potassium transport in excitable membranes. The sequence is that of Probable voltage-gated potassium channel subunit kvs-4 from Caenorhabditis elegans.